The following is a 520-amino-acid chain: Glutamate--cysteine ligase (520 aa).

Belongs to the glutamate--cysteine ligase type 1 family. Type 1 subfamily.

The enzyme catalyses L-cysteine + L-glutamate + ATP = gamma-L-glutamyl-L-cysteine + ADP + phosphate + H(+). It participates in sulfur metabolism; glutathione biosynthesis; glutathione from L-cysteine and L-glutamate: step 1/2. The protein is Glutamate--cysteine ligase of Sodalis glossinidius (strain morsitans).